Consider the following 384-residue polypeptide: L-aspartate decarboxylase (384 aa).

N6-(pyridoxal phosphate)lysine is present on lysine 231.

This sequence belongs to the group II decarboxylase family. MfnA subfamily. In terms of assembly, homodimer. Can also form homohexamers. Pyridoxal 5'-phosphate serves as cofactor.

It catalyses the reaction L-aspartate + H(+) = beta-alanine + CO2. Its pathway is cofactor biosynthesis; coenzyme A biosynthesis. With respect to regulation, inhibited by hydroxylamine. Its function is as follows. Catalyzes the decarboxylation of L-aspartate to produce beta-alanine. In vitro, can also catalyze the decarboxylation of L-glutamate to produce 4-aminobutanoate, but this activity does not seem necessary in vivo. Shows much higher activity with L-aspartate than with L-glutamate. Does not decarboxylate L-tyrosine. This Thermococcus kodakarensis (strain ATCC BAA-918 / JCM 12380 / KOD1) (Pyrococcus kodakaraensis (strain KOD1)) protein is L-aspartate decarboxylase.